Here is a 432-residue protein sequence, read N- to C-terminus: Probable protein phosphatase 2C 33 (432 aa).

Positions 27-298 constitute a PPM-type phosphatase domain; sequence GGGSERPLVR…DDTTCVVVDI (272 aa). Residues Asp74, Gly75, Asp250, and Asp289 each contribute to the Mn(2+) site.

Belongs to the PP2C family. It depends on Mg(2+) as a cofactor. Mn(2+) is required as a cofactor.

The enzyme catalyses O-phospho-L-seryl-[protein] + H2O = L-seryl-[protein] + phosphate. It carries out the reaction O-phospho-L-threonyl-[protein] + H2O = L-threonyl-[protein] + phosphate. The chain is Probable protein phosphatase 2C 33 from Oryza sativa subsp. japonica (Rice).